The following is a 518-amino-acid chain: Serine--tRNA ligase, mitochondrial (518 aa).

The transit peptide at 1–34 directs the protein to the mitochondrion; that stretch reads MAASMARLWWPFLARQGLRSRGRCVCSQNPRRSF. Position 110 is an N6-acetyllysine (K110). An N6-succinyllysine modification is found at K195. 299–301 lines the L-serine pocket; it reads TAE. 330–332 is an ATP binding site; sequence RAE. Position 337 is an N6-succinyllysine (K337). Position 345 (V345) interacts with ATP. L-serine is bound at residue E352. 418–421 is a binding site for ATP; sequence EVTS. L-serine is bound at residue T453. Residues 497-518 are disordered; it reads PLQYIGPNQPQKPRLPGQSATR.

This sequence belongs to the class-II aminoacyl-tRNA synthetase family. Type-1 seryl-tRNA synthetase subfamily. As to quaternary structure, homodimer. The tRNA molecule probably binds across the dimer. Ubiquitous.

It localises to the mitochondrion matrix. The enzyme catalyses tRNA(Ser) + L-serine + ATP = L-seryl-tRNA(Ser) + AMP + diphosphate + H(+). It catalyses the reaction tRNA(Sec) + L-serine + ATP = L-seryl-tRNA(Sec) + AMP + diphosphate + H(+). It functions in the pathway aminoacyl-tRNA biosynthesis; selenocysteinyl-tRNA(Sec) biosynthesis; L-seryl-tRNA(Sec) from L-serine and tRNA(Sec): step 1/1. Functionally, catalyzes the attachment of serine to tRNA(Ser). Is also probably able to aminoacylate tRNA(Sec) with serine, to form the misacylated tRNA L-seryl-tRNA(Sec), which will be further converted into selenocysteinyl-tRNA(Sec). This is Serine--tRNA ligase, mitochondrial (Sars2) from Mus musculus (Mouse).